A 660-amino-acid polypeptide reads, in one-letter code: MKTVVFAYHDMGCLGIEALLAAGYEISAIFTHTDNPGEKAFYGSVARLAAERGIPVYAPDNVNHPLWVERIAQLSPEVIFSFYYRHLICDEILQLAPRGAFNLHGSLLPKYRGRAPLNWVLVNGETETGVTLHRMVKRADAGAIVAQLRVAIAPDDIAITLHHKLCHAARQLLEQTLPAIKHGNILEIAQRENEATCFGRRTPDDSFLEWHKSASVLHNMVRAVADPWPGAFSYVGNQKFTVWSSRVHPHASKAQPGSVISVAPLLIACGDGALEIVTGQAGDGITMQGSQLAQTLGLVQGSRLNSQPACAARRRTRVLILGVNGFIGNHLTERLLREDHYEVYGLDIGSDAISRFMNHPHFHFVEGDISIHSEWIEYHVKKCDVVLPLVAIATPIEYTRNPLRVFELDFEENLRIIRYCVKYRKRIIFPSTSEVYGMCSDKYFDEDHSNLIVGPVNKPRWIYSVSKQLLDRVIWAYGEKEGLQFTLFRPFNWMGPRLDNLNAARIGSSRAITQLILNLVEGSPIKLIDGGKQKRCFTDIRDGIEALYRIIENAGNRCDGEIINIGNPENEASIEELGEMLLASFEKHPLRHYFPPFAGFRVVESSSYYGKGYQDVEHRKPSIRNARRCLDWEPKIDMQETIDETLDFFLRTVDLTDKPS.

The tract at residues 1–304 (MKTVVFAYHD…TLGLVQGSRL (304 aa)) is formyltransferase ArnAFT. A (6R)-10-formyltetrahydrofolate-binding site is contributed by 86–88 (HLI). The active-site Proton donor; for formyltransferase activity is the H104. Residues R114 and 136–140 (VKRAD) contribute to the (6R)-10-formyltetrahydrofolate site. The tract at residues 314–660 (RRTRVLILGV…RTVDLTDKPS (347 aa)) is dehydrogenase ArnADH. Residues D347 and 368 to 369 (DI) contribute to the NAD(+) site. Residues A393, Y398, and 432 to 433 (TS) contribute to the UDP-alpha-D-glucuronate site. The active-site Proton acceptor; for decarboxylase activity is E434. UDP-alpha-D-glucuronate is bound by residues R460, N492, 526 to 535 (KLIDGGKQKR), and Y613. Catalysis depends on R619, which acts as the Proton donor; for decarboxylase activity.

The protein in the N-terminal section; belongs to the Fmt family. UDP-L-Ara4N formyltransferase subfamily. It in the C-terminal section; belongs to the NAD(P)-dependent epimerase/dehydratase family. UDP-glucuronic acid decarboxylase subfamily. In terms of assembly, homohexamer, formed by a dimer of trimers.

It carries out the reaction UDP-alpha-D-glucuronate + NAD(+) = UDP-beta-L-threo-pentopyranos-4-ulose + CO2 + NADH. The catalysed reaction is UDP-4-amino-4-deoxy-beta-L-arabinose + (6R)-10-formyltetrahydrofolate = UDP-4-deoxy-4-formamido-beta-L-arabinose + (6S)-5,6,7,8-tetrahydrofolate + H(+). Its pathway is nucleotide-sugar biosynthesis; UDP-4-deoxy-4-formamido-beta-L-arabinose biosynthesis; UDP-4-deoxy-4-formamido-beta-L-arabinose from UDP-alpha-D-glucuronate: step 1/3. It functions in the pathway nucleotide-sugar biosynthesis; UDP-4-deoxy-4-formamido-beta-L-arabinose biosynthesis; UDP-4-deoxy-4-formamido-beta-L-arabinose from UDP-alpha-D-glucuronate: step 3/3. The protein operates within bacterial outer membrane biogenesis; lipopolysaccharide biosynthesis. In terms of biological role, bifunctional enzyme that catalyzes the oxidative decarboxylation of UDP-glucuronic acid (UDP-GlcUA) to UDP-4-keto-arabinose (UDP-Ara4O) and the addition of a formyl group to UDP-4-amino-4-deoxy-L-arabinose (UDP-L-Ara4N) to form UDP-L-4-formamido-arabinose (UDP-L-Ara4FN). The modified arabinose is attached to lipid A and is required for resistance to polymyxin and cationic antimicrobial peptides. This Escherichia coli O6:H1 (strain CFT073 / ATCC 700928 / UPEC) protein is Bifunctional polymyxin resistance protein ArnA.